The sequence spans 396 residues: G-protein coupled receptor 84 (396 aa).

The Extracellular segment spans residues Met-1 to Tyr-21. 2 N-linked (GlcNAc...) asparagine glycosylation sites follow: Asn-3 and Asn-8. Residues Phe-22–Leu-42 form a helical membrane-spanning segment. Residues Leu-43–Leu-57 are Cytoplasmic-facing. The helical transmembrane segment at Leu-58 to Val-78 threads the bilayer. Topologically, residues Asp-79–Arg-94 are extracellular. Residues Ile-95–Ala-115 traverse the membrane as a helical segment. Over Leu-116–Lys-135 the chain is Cytoplasmic. The chain crosses the membrane as a helical span at residues Gly-136–Trp-156. At Asn-157–Thr-180 the chain is on the extracellular side. The chain crosses the membrane as a helical span at residues Ile-181 to Ile-201. At His-202 to Met-320 the chain is on the cytoplasmic side. Phosphoserine occurs at positions 221 and 224. The disordered stretch occupies residues Leu-241–Ala-310. Positions Gly-253–Gly-269 are enriched in polar residues. Thr-263 and Thr-264 each carry phosphothreonine. Residues Ser-290–Thr-308 are compositionally biased toward basic and acidic residues. Residues Cys-321 to Leu-341 traverse the membrane as a helical segment. At Asp-342–His-352 the chain is on the extracellular side. The chain crosses the membrane as a helical span at residues Met-353–Met-373. Over Asn-374–His-396 the chain is Cytoplasmic.

It belongs to the G-protein coupled receptor 1 family. Interacts with ARRB2 and ARR3. Post-translationally, phosphorylated by a subset of GPR84-activating ligands. Constitutively phosphorylated at Ser-221 and Ser-224 in the absence of 2-HTP. By contrast, Thr-263 and Thr-264 are phosphorylated only following prior cell treatment with 2-HTP. In terms of tissue distribution, expressed predominantly in hematopoietic tissues. Expressed mainly in the bone marrow with transcripts also detected in spleen, the lymph node, liver and the lung.

The protein resides in the cell membrane. Functionally, g protein-coupled receptor that responds endogenously to dietary fatty acids or nutrient, specifically medium-chain free fatty acid (FFA) with carbon chain lengths of C9 to C14. Capric acid (C10:0), undecanoic acid (C11:0) and lauric acid (C12:0) are the most potent agonists. In immune cells, functions as a pro-inflammatory receptor via 6-OAU and promotes the expression of pro-inflammatory mediators such as TNFalpha, IL-6 and IL-12B as well as stimulating chemotactic responses through activation of signaling mediators AKT, ERK and NF-kappa-B (by sim). In addition, triggers increased bacterial adhesion and phagocytosis in macrophages and regulates pro-inflammatory function via enhancing NLRP3 inflammasome activation. Also plays an important role in inflammation by modulating neutrophil functions. Mechanistically, promotes neutrophil chemotaxis, reactive oxygen species (ROS) production and degranulation via LYN-AKT/ERK pathway. To regulate ROS production, communicates with the two formyl peptide receptors FPR2 and FPR1 to control the NADPH oxidase activity in neutrophils. In Mus musculus (Mouse), this protein is G-protein coupled receptor 84 (Gpr84).